The sequence spans 338 residues: Photosystem II assembly lipoprotein Ycf48 (338 aa).

Residues 1 to 23 (MKRLFSNVINLTLVLIVGVALSG) form the signal peptide. Cys-24 carries N-palmitoyl cysteine lipidation. A lipid anchor (S-diacylglycerol cysteine) is attached at Cys-24.

Belongs to the Ycf48 family. Part of early PSII assembly complexes which includes D1 (psbA) and PsbI; not found in mature PSII. Binds to the lumenal side of PSII complexes. Interacts with YidC.

It is found in the cellular thylakoid membrane. Functionally, a factor required for optimal assembly of photosystem II (PSII), acting in the early stages of PSII assembly. Also plays a role in replacement of photodamaged D1 (psbA). Assists YidC in synthesis of chlorophyll-binding proteins. The polypeptide is Photosystem II assembly lipoprotein Ycf48 (Prochlorococcus marinus (strain NATL2A)).